The primary structure comprises 217 residues: Adenylate kinase (217 aa).

10–15 (GAGKGT) contacts ATP. Residues 30–59 (STGDMFRAAMKEETPLGLEAKSYIDKGELV) form an NMP region. Residues Thr31, Arg36, 57 to 59 (ELV), 85 to 88 (GFPR), and Gln92 each bind AMP. Positions 126 to 163 (GRRICSVCGTTYHLVFNPPKTPGVCDKDGGDLYQRADD) are LID. Arg127 serves as a coordination point for ATP. Cys130 and Cys133 together coordinate Zn(2+). An ATP-binding site is contributed by 136–137 (TY). Zn(2+) contacts are provided by Cys150 and Asp153. AMP-binding residues include Arg160 and Arg171. Gln199 provides a ligand contact to ATP.

It belongs to the adenylate kinase family. As to quaternary structure, monomer.

Its subcellular location is the cytoplasm. It catalyses the reaction AMP + ATP = 2 ADP. It functions in the pathway purine metabolism; AMP biosynthesis via salvage pathway; AMP from ADP: step 1/1. Catalyzes the reversible transfer of the terminal phosphate group between ATP and AMP. Plays an important role in cellular energy homeostasis and in adenine nucleotide metabolism. The polypeptide is Adenylate kinase (Bacillus velezensis (strain DSM 23117 / BGSC 10A6 / LMG 26770 / FZB42) (Bacillus amyloliquefaciens subsp. plantarum)).